Reading from the N-terminus, the 72-residue chain is uncharacterized protein (72 aa).

The segment covering Met-1–Gly-38 has biased composition (low complexity). Residues Met-1 to His-42 are disordered.

This is an uncharacterized protein from Dictyostelium discoideum (Social amoeba).